We begin with the raw amino-acid sequence, 542 residues long: CTP synthase (542 aa).

An amidoligase domain region spans residues 1–265 (MTKFVFVTGG…DEIVCHKLNL (265 aa)). Ser-13 contributes to the CTP binding site. Ser-13 serves as a coordination point for UTP. Residues 14-19 (SLGKGI) and Asp-71 contribute to the ATP site. Asp-71 and Glu-139 together coordinate Mg(2+). Residues 146-148 (DIE), 186-191 (KTKPTQ), and Lys-222 each bind CTP. UTP is bound by residues 186-191 (KTKPTQ) and Lys-222. In terms of domain architecture, Glutamine amidotransferase type-1 spans 290–542 (NVAFVGKYVD…IAAALANRKA (253 aa)). L-glutamine is bound at residue Gly-351. The Nucleophile; for glutamine hydrolysis role is filled by Cys-378. L-glutamine contacts are provided by residues 379–382 (LGMQ), Glu-402, and Arg-468. Catalysis depends on residues His-515 and Glu-517.

This sequence belongs to the CTP synthase family. In terms of assembly, homotetramer.

It catalyses the reaction UTP + L-glutamine + ATP + H2O = CTP + L-glutamate + ADP + phosphate + 2 H(+). The enzyme catalyses L-glutamine + H2O = L-glutamate + NH4(+). The catalysed reaction is UTP + NH4(+) + ATP = CTP + ADP + phosphate + 2 H(+). It functions in the pathway pyrimidine metabolism; CTP biosynthesis via de novo pathway; CTP from UDP: step 2/2. Its activity is regulated as follows. Allosterically activated by GTP, when glutamine is the substrate; GTP has no effect on the reaction when ammonia is the substrate. The allosteric effector GTP functions by stabilizing the protein conformation that binds the tetrahedral intermediate(s) formed during glutamine hydrolysis. Inhibited by the product CTP, via allosteric rather than competitive inhibition. Its function is as follows. Catalyzes the ATP-dependent amination of UTP to CTP with either L-glutamine or ammonia as the source of nitrogen. Regulates intracellular CTP levels through interactions with the four ribonucleotide triphosphates. This is CTP synthase from Methylobacillus flagellatus (strain ATCC 51484 / DSM 6875 / VKM B-1610 / KT).